The following is a 351-amino-acid chain: Phosphate acyltransferase (351 aa).

This sequence belongs to the PlsX family. Homodimer. Probably interacts with PlsY.

The protein localises to the cytoplasm. It carries out the reaction a fatty acyl-[ACP] + phosphate = an acyl phosphate + holo-[ACP]. It participates in lipid metabolism; phospholipid metabolism. In terms of biological role, catalyzes the reversible formation of acyl-phosphate (acyl-PO(4)) from acyl-[acyl-carrier-protein] (acyl-ACP). This enzyme utilizes acyl-ACP as fatty acyl donor, but not acyl-CoA. This chain is Phosphate acyltransferase, found in Gloeothece citriformis (strain PCC 7424) (Cyanothece sp. (strain PCC 7424)).